The following is a 429-amino-acid chain: uncharacterized protein (429 aa).

10 helical membrane-spanning segments follow: residues 26 to 46 (VALT…HDIF), 51 to 71 (TGID…VGVL), 99 to 119 (LVLV…VLLI), 135 to 155 (TSFL…TLVG), 173 to 193 (FMLH…AVLP), 223 to 243 (LLVK…AHPV), 278 to 298 (TLLF…TGVV), 311 to 331 (GNIV…SGII), 361 to 381 (WWAL…GASA), and 407 to 427 (VVTA…YFVL).

It belongs to the CitM (TC 2.A.11) transporter family.

Its subcellular location is the cell membrane. This is an uncharacterized protein from Mycobacterium tuberculosis (strain ATCC 25618 / H37Rv).